Consider the following 305-residue polypeptide: Nod factor export ATP-binding protein I (305 aa).

An ABC transporter domain is found at 8-237 (IDLVGVRKSF…HIGCNVIEIY (230 aa)). 40–47 (GPNGAGKS) serves as a coordination point for ATP.

Belongs to the ABC transporter superfamily. Lipooligosaccharide exporter (TC 3.A.1.102) family. In terms of assembly, the complex is composed of two ATP-binding proteins (NodI) and two transmembrane proteins (NodJ).

It is found in the cell inner membrane. Its function is as follows. Part of the ABC transporter complex NodIJ involved in the export of the nodulation factors (Nod factors), the bacterial signal molecules that induce symbiosis and subsequent nodulation induction. Nod factors are LCO (lipo-chitin oligosaccharide), a modified beta-1,4-linked N-acetylglucosamine oligosaccharide. This subunit is responsible for energy coupling to the transport system. The polypeptide is Nod factor export ATP-binding protein I (Bradyrhizobium sp. (strain SNU001)).